We begin with the raw amino-acid sequence, 142 residues long: Large ribosomal subunit protein uL11 (142 aa).

The protein belongs to the universal ribosomal protein uL11 family. As to quaternary structure, part of the ribosomal stalk of the 50S ribosomal subunit. Interacts with L10 and the large rRNA to form the base of the stalk. L10 forms an elongated spine to which L12 dimers bind in a sequential fashion forming a multimeric L10(L12)X complex. One or more lysine residues are methylated.

Its function is as follows. Forms part of the ribosomal stalk which helps the ribosome interact with GTP-bound translation factors. This Rhodospirillum rubrum (strain ATCC 11170 / ATH 1.1.1 / DSM 467 / LMG 4362 / NCIMB 8255 / S1) protein is Large ribosomal subunit protein uL11.